The following is a 530-amino-acid chain: NVEIGTPSTTVTWTVPTAIDASAVTTVSSHNPGQSFITGTTTTVVYTATDEFGNIGQCAFTITVTATDSIDPVVTVSSGFITQQVEIGLGGVNVFYTEPTATDNSGTAVLFSRSAQPGDFFPVGQTVVTYIFQDPSGNFGTGTFTVNVVEVDTTPPVVTVPNGIITRQVEIGTSGIIVFFSEPTATDNSGTAILDSRTHQPGDVFPVGQTIVTYTFRDPAGNPATGTFTINVVEVDTTPPVITVPTPSIITRQVEVGTPGVSVFYQEPTATDNSGTAILVSRTNQPGDVFPVGQTVVTYTFQDPSGNPASATVTINVVEVDTTPPVISVPSTFITRTVELGTPGVNVFYPEPTASDNSGTAILVTRTNQPGDFFSVGQTVVTYTFQDPTGNPATATVTINIVEEDTTPPTVNCINDVIRTVELGTTSAQVFYSEPTASDVGQATLISRTAQPGDSFPVGATVVTYIFGDNAGNIADPCVFTITVNTVDTTPPTVNCVSDVVRVVELGTTSLAVVYTEPTATDISGTASLV.

HYR domains follow at residues 1–66, 67–150, 151–234, 235–319, 320–403, 404–486, and 487–530; these read NVEI…TVTA, TDSI…NVVE, VDTT…NVVE, VDTT…NIVE, EDTT…TVNT, and VDTT…ASLV.

As to quaternary structure, homooligomer in presence of calcium. In terms of processing, glycosylated.

It is found in the secreted. The protein localises to the extracellular space. The protein resides in the extracellular matrix. Functionally, major constituent of the hyaline layer. The hyaline layer of echinoderm embryos is an extraembryonic matrix that functions as a substrate for cell adhesion through early development. This is Hyalin from Lytechinus variegatus (Green sea urchin).